Consider the following 112-residue polypeptide: Large ribosomal subunit protein uL24 (112 aa).

This sequence belongs to the universal ribosomal protein uL24 family. In terms of assembly, part of the 50S ribosomal subunit.

In terms of biological role, one of two assembly initiator proteins, it binds directly to the 5'-end of the 23S rRNA, where it nucleates assembly of the 50S subunit. Functionally, one of the proteins that surrounds the polypeptide exit tunnel on the outside of the subunit. The sequence is that of Large ribosomal subunit protein uL24 from Magnetococcus marinus (strain ATCC BAA-1437 / JCM 17883 / MC-1).